Consider the following 94-residue polypeptide: Aspartyl/glutamyl-tRNA(Asn/Gln) amidotransferase subunit C (94 aa).

It belongs to the GatC family. As to quaternary structure, heterotrimer of A, B and C subunits.

It carries out the reaction L-glutamyl-tRNA(Gln) + L-glutamine + ATP + H2O = L-glutaminyl-tRNA(Gln) + L-glutamate + ADP + phosphate + H(+). It catalyses the reaction L-aspartyl-tRNA(Asn) + L-glutamine + ATP + H2O = L-asparaginyl-tRNA(Asn) + L-glutamate + ADP + phosphate + 2 H(+). Allows the formation of correctly charged Asn-tRNA(Asn) or Gln-tRNA(Gln) through the transamidation of misacylated Asp-tRNA(Asn) or Glu-tRNA(Gln) in organisms which lack either or both of asparaginyl-tRNA or glutaminyl-tRNA synthetases. The reaction takes place in the presence of glutamine and ATP through an activated phospho-Asp-tRNA(Asn) or phospho-Glu-tRNA(Gln). This Campylobacter jejuni subsp. doylei (strain ATCC BAA-1458 / RM4099 / 269.97) protein is Aspartyl/glutamyl-tRNA(Asn/Gln) amidotransferase subunit C.